The following is a 570-amino-acid chain: Biotin biosynthesis bifunctional protein BioHC (570 aa).

The tract at residues 1 to 29 is disordered; that stretch reads MTEVNVRAAATPEEKPFLNRTRHEPANPQ. The segment at 1 to 279 is carboxylesterase; that stretch reads MTEVNVRAAA…HISHPREVAT (279 aa). Positions 12–25 are enriched in basic and acidic residues; sequence PEEKPFLNRTRHEP. Substrate-binding positions include Trp41, 105–106, and 175–179; these read SL and FIALQ. The active-site Nucleophile is Ser105. Active-site residues include Asp239 and His267. His267 provides a ligand contact to substrate. Residues 280–570 are malonyl-ACP O-methyltransferase; sequence MINSFLRQQA…RKPLDESASA (291 aa).

It in the N-terminal section; belongs to the AB hydrolase superfamily. Carboxylesterase BioH family. The protein in the C-terminal section; belongs to the methyltransferase superfamily.

The catalysed reaction is a carboxylic ester + H2O = an alcohol + a carboxylate + H(+). The enzyme catalyses malonyl-[ACP] + S-adenosyl-L-methionine = malonyl-[ACP] methyl ester + S-adenosyl-L-homocysteine. It participates in cofactor biosynthesis; biotin biosynthesis. Functionally, converts the free carboxyl group of a malonyl-thioester to its methyl ester by transfer of a methyl group from S-adenosyl-L-methionine (SAM). It allows to synthesize pimeloyl-ACP via the fatty acid synthetic pathway. The physiological role of BioH is to remove the methyl group introduced by BioC when the pimeloyl moiety is complete. It allows to synthesize pimeloyl-ACP via the fatty acid synthetic pathway through the hydrolysis of the ester bonds of pimeloyl-ACP esters. The protein is Biotin biosynthesis bifunctional protein BioHC (bioC) of Teredinibacter turnerae (strain ATCC 39867 / T7901).